The following is a 1081-amino-acid chain: Serine/threonine-protein kinase PKH2 (1081 aa).

Ser138 is subject to Phosphoserine. One can recognise a Protein kinase domain in the interval 179–443 (FKFGSVIGDG…ISQIKEHHFF (265 aa)). ATP contacts are provided by residues 189-191 (AYS) and Lys208. The PIF-pocket stretch occupies residues 210–255 (LNKEYLIRQKKVKYVSIEKTALQKLNNSPSVVRLFSTFQDESSLYF). ATP contacts are provided by residues 258 to 260 (EYA) and Asp264. Residue Asp303 is the Proton acceptor of the active site. Positions 307 and 321 each coordinate ATP. The segment covering 494–526 (HLVTQRSASSPSVEETTHSTLYNNNTHASTESE) has biased composition (polar residues). Disordered stretches follow at residues 494-652 (HLVT…TYQM), 805-833 (NRSG…NKGS), and 970-1017 (IERR…INSA). Residues 527–538 (ISIKKRPTDERT) show a composition bias toward basic and acidic residues. Composition is skewed to low complexity over residues 564–575 (AASAALAASAAL) and 582–602 (SYPT…TSRP). At Ser619 the chain carries Phosphoserine. Residues 632-645 (PMPPYTPPMSPPMT) show a composition bias toward pro residues. Composition is skewed to polar residues over residues 805-819 (NRSG…NSSP) and 998-1017 (HSQS…INSA). A Phosphoserine modification is found at Ser1009.

The protein belongs to the protein kinase superfamily. AGC Ser/Thr protein kinase family. PDPK1 subfamily.

The protein localises to the nucleus. It localises to the cytoplasm. It is found in the cell cortex. The catalysed reaction is L-seryl-[protein] + ATP = O-phospho-L-seryl-[protein] + ADP + H(+). The enzyme catalyses L-threonyl-[protein] + ATP = O-phospho-L-threonyl-[protein] + ADP + H(+). With respect to regulation, sphingoid base activates kinase activity. In terms of biological role, serine/threonine-protein kinase which is part sphingolipid-mediated signaling pathway that is required for the internalization step of endocytosis by regulating eisosome assembly and organization, and modulating the organization of the plasma membrane. Phosphorylates and activates PKC1. Activates YPK1 and YPK2, 2 components of signaling cascade required for maintenance of cell wall integrity. Required for stress-induced P-body assembly and regulates global mRNA decay at the deadenylation step. This Saccharomyces cerevisiae (strain ATCC 204508 / S288c) (Baker's yeast) protein is Serine/threonine-protein kinase PKH2 (PKH2).